The primary structure comprises 325 residues: Acetyl-coenzyme A carboxylase carboxyl transferase subunit alpha (325 aa).

The region spanning 35–292 is the CoA carboxyltransferase C-terminal domain; it reads EINKLEARLE…DDVLKRSLRE (258 aa).

This sequence belongs to the AccA family. As to quaternary structure, acetyl-CoA carboxylase is a heterohexamer composed of biotin carboxyl carrier protein (AccB), biotin carboxylase (AccC) and two subunits each of ACCase subunit alpha (AccA) and ACCase subunit beta (AccD).

The protein resides in the cytoplasm. It carries out the reaction N(6)-carboxybiotinyl-L-lysyl-[protein] + acetyl-CoA = N(6)-biotinyl-L-lysyl-[protein] + malonyl-CoA. The protein operates within lipid metabolism; malonyl-CoA biosynthesis; malonyl-CoA from acetyl-CoA: step 1/1. Functionally, component of the acetyl coenzyme A carboxylase (ACC) complex. First, biotin carboxylase catalyzes the carboxylation of biotin on its carrier protein (BCCP) and then the CO(2) group is transferred by the carboxyltransferase to acetyl-CoA to form malonyl-CoA. This is Acetyl-coenzyme A carboxylase carboxyl transferase subunit alpha from Anoxybacillus flavithermus (strain DSM 21510 / WK1).